Here is a 65-residue protein sequence, read N- to C-terminus: Large ribosomal subunit protein uL30 (65 aa).

Belongs to the universal ribosomal protein uL30 family. In terms of assembly, part of the 50S ribosomal subunit.

The protein is Large ribosomal subunit protein uL30 of Mesorhizobium japonicum (strain LMG 29417 / CECT 9101 / MAFF 303099) (Mesorhizobium loti (strain MAFF 303099)).